A 63-amino-acid polypeptide reads, in one-letter code: Large ribosomal subunit protein uL30 (63 aa).

This sequence belongs to the universal ribosomal protein uL30 family. In terms of assembly, part of the 50S ribosomal subunit.

The sequence is that of Large ribosomal subunit protein uL30 from Rhodospirillum rubrum (strain ATCC 11170 / ATH 1.1.1 / DSM 467 / LMG 4362 / NCIMB 8255 / S1).